The following is a 1001-amino-acid chain: Protein MEI2-like 4 (1001 aa).

The disordered stretch occupies residues 100 to 120 (HANLPPSPWRPDQETGRQTDS). 2 RRM domains span residues 275-348 (RTLF…YSIP) and 360-433 (GTIV…TSRL). Disordered stretches follow at residues 767 to 815 (GGPS…KKQY) and 941 to 1001 (FHSD…PAKD). Residues 793 to 803 (PGERMRSRRND) show a composition bias toward basic and acidic residues. Residues 978–994 (DISITSVNCDTSTNGVD) show a composition bias toward polar residues.

In terms of biological role, probable RNA-binding protein that may play a role in growth regulation. The polypeptide is Protein MEI2-like 4 (ML4) (Oryza sativa subsp. japonica (Rice)).